An 84-amino-acid polypeptide reads, in one-letter code: Gomesin-like peptide (84 aa).

Positions 1–23 are cleaved as a signal peptide; it reads MNRTRALVCLFLAVLILAHESEA. A Pyrrolidone carboxylic acid modification is found at Gln-24. 2 cysteine pairs are disulfide-bonded: Cys-25–Cys-38 and Cys-29–Cys-34. At Arg-41 the chain carries Arginine amide. Positions 42–84 are excised as a propeptide; it reads GKRSVEEPSGGAQVVEKRAVDDADIPSAVEERELDEEESIEFR.

As to expression, expressed by the venom gland.

The protein resides in the secreted. Functionally, antibacterial peptide. This is Gomesin-like peptide from Hadronyche infensa (Fraser island funnel-web spider).